We begin with the raw amino-acid sequence, 333 residues long: 4-hydroxy-3-methylbut-2-enyl diphosphate reductase (333 aa).

Residue Cys20 participates in [4Fe-4S] cluster binding. (2E)-4-hydroxy-3-methylbut-2-enyl diphosphate-binding residues include His49 and His85. Dimethylallyl diphosphate contacts are provided by His49 and His85. Isopentenyl diphosphate is bound by residues His49 and His85. Cys107 contributes to the [4Fe-4S] cluster binding site. Residue His135 coordinates (2E)-4-hydroxy-3-methylbut-2-enyl diphosphate. His135 provides a ligand contact to dimethylallyl diphosphate. His135 is a binding site for isopentenyl diphosphate. Glu137 (proton donor) is an active-site residue. Thr176 is a (2E)-4-hydroxy-3-methylbut-2-enyl diphosphate binding site. Cys206 provides a ligand contact to [4Fe-4S] cluster. Residues Ser234, Ser235, Asn236, and Ser279 each coordinate (2E)-4-hydroxy-3-methylbut-2-enyl diphosphate. Positions 234, 235, 236, and 279 each coordinate dimethylallyl diphosphate. Residues Ser234, Ser235, Asn236, and Ser279 each coordinate isopentenyl diphosphate.

The protein belongs to the IspH family. The cofactor is [4Fe-4S] cluster.

It catalyses the reaction isopentenyl diphosphate + 2 oxidized [2Fe-2S]-[ferredoxin] + H2O = (2E)-4-hydroxy-3-methylbut-2-enyl diphosphate + 2 reduced [2Fe-2S]-[ferredoxin] + 2 H(+). It carries out the reaction dimethylallyl diphosphate + 2 oxidized [2Fe-2S]-[ferredoxin] + H2O = (2E)-4-hydroxy-3-methylbut-2-enyl diphosphate + 2 reduced [2Fe-2S]-[ferredoxin] + 2 H(+). It functions in the pathway isoprenoid biosynthesis; dimethylallyl diphosphate biosynthesis; dimethylallyl diphosphate from (2E)-4-hydroxy-3-methylbutenyl diphosphate: step 1/1. Its pathway is isoprenoid biosynthesis; isopentenyl diphosphate biosynthesis via DXP pathway; isopentenyl diphosphate from 1-deoxy-D-xylulose 5-phosphate: step 6/6. In terms of biological role, catalyzes the conversion of 1-hydroxy-2-methyl-2-(E)-butenyl 4-diphosphate (HMBPP) into a mixture of isopentenyl diphosphate (IPP) and dimethylallyl diphosphate (DMAPP). Acts in the terminal step of the DOXP/MEP pathway for isoprenoid precursor biosynthesis. The chain is 4-hydroxy-3-methylbut-2-enyl diphosphate reductase from Rhizobium johnstonii (strain DSM 114642 / LMG 32736 / 3841) (Rhizobium leguminosarum bv. viciae).